The chain runs to 418 residues: Vacuole membrane protein HFL1 (418 aa).

Residues 1-5 lie on the Extracellular side of the membrane; the sequence is MENKL. The chain crosses the membrane as a helical span at residues 6–26; it reads LCWWLYWPCVYSSIIATIISF. Residues 27 to 43 are Cytoplasmic-facing; sequence YTITRHLLNYRKPYEQR. A helical membrane pass occupies residues 44 to 64; sequence LSIRILLLVPIFSVSCASGII. Residues 65–78 are Extracellular-facing; the sequence is KPEAAQFYVDPIRE. The chain crosses the membrane as a helical span at residues 79 to 99; sequence FYEAFVIYTFFTFLTLLLGGE. Residues 100-141 lie on the Cytoplasmic side of the membrane; sequence RNIITVLSLNHAPTRHPIPLIGKICKPIDLSDPFDFLFVKKG. A helical transmembrane segment spans residues 142 to 162; it reads ILQYVWFKPFYCFGTLICSAW. The Extracellular portion of the chain corresponds to 163-168; that stretch reads KLPKFE. Residues 169-189 form a helical membrane-spanning segment; the sequence is IFLNVFYNISVTWSLYSLALF. Over 190–205 the chain is Cytoplasmic; it reads WKCLYPELTPYKPWLK. The chain crosses the membrane as a helical span at residues 206–226; that stretch reads FLCVKLIIFASYWQSIIIQGL. The Extracellular segment spans residues 227-246; it reads VVTGKLGTGNQDRTSGYVYK. Residues 247 to 267 form a helical membrane-spanning segment; sequence NGLLCIEMVPFAILHAVAFPW. Residues 268 to 418 are Cytoplasmic-facing; the sequence is NKYTAFSIPY…DVQSRSSMAC (151 aa). The tract at residues 379 to 402 is ATG8-interacting region; the sequence is RTFPEDPNYPVVHDYTMGHRYSRS.

The protein belongs to the TMEM184 family. Interacts with ATG8.

The protein resides in the vacuole membrane. Vacuole membrane protein that recruits ATG8 to facilitate the degradation of vacuolar integral membrane proteins during early-stationary vacuole turnover (EVT) when cells enter stationary phase. The sequence is that of Vacuole membrane protein HFL1 from Saccharomyces cerevisiae (strain ATCC 204508 / S288c) (Baker's yeast).